Here is an 867-residue protein sequence, read N- to C-terminus: MIKKLKEIPFFKSTEMKIAEKTLQQINDLEPSVVNLTDEELQNKTDEFVRRIQEGETLEHIRPEVFAVSREATKRVLKKRPYDVQMLGGIILDLGSVAEMRTGEGKTITSIAPVYLNALEKKGVIVSTVNEYLAERDAAEMGEVFSFLKMTVGVNKPSMSPEEKKQIYQCDITYSIHSELGFDYLRDNMVTNINDKVQRGLNYILLDEVDSILIDEARTPLIISGGESSSSYMYEVANQFARTLQPGDYEIDEESKTIKLVDSGIDKANKFFTLSNLYDIKNSELVHRIQNALRANFIMKKDVEYIVKDEKIELIDAFTGRIMEGRAYSEGLQQAIQAKEFLEIESETKTLATITYQNFFRMFKKLSGMTGTAKTEEQEFIDIYNMRVNPIPTNLPNIRVDDEDSIYWGTRQKLNAILKEVKQVSKTGQPILIGTSQIEQSEQLHQLFDQNGIVHTVLNAKQNEQEANIISQAGQLNAITIATNMAGRGTDIKPSKEALAVGGLYVLGTDKSESRRIDNQLRGRSGRQGDIGYSKFFLSLDDQLILRFAGADKLKEIFPKSEEALNSKQLKRHFSNAQKKIEGFNYDSRKTVLNYDDVIRQQRELMYSQRDLILVSEDLLFVIERMVFRSVDDVLKNSMFLLKNGGFDYTKLTEYINDQWLKPFDFKFEESKLSHLHEKDLAEYIFQNLMEQYMIVRQRLIDSFGEDSILYHERSILISTIDSYWQNHINSMDKLRSNSNMVQYAQKNPYQVYTQKGSKKFERLIVEIALQSSVKLFNNPSAYRQDQMEEVMIEGYTQEFIDKIPESEREYFKTLPQDLKSKIVKNLIQLEQSIAMVESNDQSQDLQSITIDILPDQNLNNSSDEAK.

ATP is bound by residues glutamine 85, 103-107 (GEGKT), and aspartate 491.

This sequence belongs to the SecA family. As to quaternary structure, monomer and homodimer. Part of the essential Sec protein translocation apparatus which comprises SecA, SecYEG and auxiliary proteins SecDF. Other proteins may also be involved.

It is found in the cell membrane. The protein resides in the cytoplasm. It carries out the reaction ATP + H2O + cellular proteinSide 1 = ADP + phosphate + cellular proteinSide 2.. Functionally, part of the Sec protein translocase complex. Interacts with the SecYEG preprotein conducting channel. Has a central role in coupling the hydrolysis of ATP to the transfer of proteins into and across the cell membrane, serving as an ATP-driven molecular motor driving the stepwise translocation of polypeptide chains across the membrane. The protein is Protein translocase subunit SecA of Mycoplasmopsis pulmonis (strain UAB CTIP) (Mycoplasma pulmonis).